We begin with the raw amino-acid sequence, 361 residues long: MNLFIYVLLLSIWTSSCLDRNESNGSATAVTTHAEFKQTKLQELRRRLLIIVIGTLITGYMVSCTCLLHYSCDSEEAHTAAKDKKEDITIKASRSSKISFTDSKSPTAGLGDPERQSVVSRIDKSSGPSSPRKVPSSAEKLVRPSSQKKPSKPSAPKKVLGSPPQEKLHRTRSPKKAHRQAHAHKPVSQVSPSYPEKAIKSTWPPSLQCRAKPTKTPLPYPKNQSFPEQSSVDKLTKRQRYLKLKCPASAGRAEILSRPHPVKFCRCYKEKCLVCRAVSEPFITHVSDANKKHVPVPLFSRELKHFYKSYKKKQPKYNTLYGNMSDSDITTYNSDGESDREVIIMCNIKCKEDIYKNSRNN.

A signal peptide spans methionine 1–cysteine 17. The Extracellular segment spans residues leucine 18 to arginine 47. An N-linked (GlcNAc...) asparagine glycan is attached at asparagine 24. Residues leucine 48–leucine 68 traverse the membrane as a helical segment. At histidine 69–asparagine 361 the chain is on the cytoplasmic side. The segment covering serine 95–proline 106 has biased composition (polar residues). Residues serine 95–lysine 197 are disordered. Residues proline 144–lysine 158 show a composition bias toward low complexity. Positions histidine 169 to lysine 185 are enriched in basic residues.

It is found in the membrane. This is an uncharacterized protein from Bos taurus (Bovine).